The sequence spans 362 residues: 4-hydroxytryptamine kinase (362 aa).

Residues asparagine 37, lysine 57, and 118–120 each bind ATP; that span reads QDV. Residue aspartate 224 is part of the active site. 249–251 is a binding site for ATP; that stretch reads DWE.

Belongs to the methylthioribose kinase family. As to quaternary structure, monomer. Mg(2+) serves as cofactor.

The enzyme catalyses 4-hydroxytryptamine + ATP = norbaeocystin + ADP + H(+). It carries out the reaction psilocin + ATP = psilocybin + ADP + H(+). The catalysed reaction is 4-hydroxy-N,N,N-trimethyltryptamine + ATP = aeruginascin + ADP + H(+). It participates in secondary metabolite biosynthesis. In terms of biological role, 4-hydroxytryptamine kinase; part of the gene cluster that mediates the biosynthesis of psilocybin, a psychotropic tryptamine-derived natural product. The first step in the pathway is the decarboxylation of L-tryptophan to tryptamine by the decarboxylase psiD. 4-hydroxy-L-tryptophan is accepted as substrate by psiD as well. The cytochrome P450 monooxygenase psiH then converts tryptamine to 4-hydroxytryptamine. The kinase psiK catalyzes the 4-O-phosphorylation step by converting 4-hydroxytryptamine into norbaeocystin. The methyltransferase psiM then catalyzes iterative methyl transfer to the amino group of norbaeocystin to yield psilocybin via a monomethylated intermediate, baeocystin. 4-hydroxy-6-methyl-l-tryptophancan also be converted the decarboxylase PsiD, kinase PsiK, and methyltransferase PsiM into respectively 6-methyl-norbaeocystin, 6-methylbaeocystin, and 6-methylpsilocybin. PsiK kinase can also turn psilocin into psilocybin. This activity may represent a protective mechanism to rephosphorylate the unstable psilocin to the stable psilocybin in case of intracellular ester cleavage. Moreover, psiK is able to O-phosphorylate the quaternary amine 4-hydroxy-N,N,N-trimethyltryptamine (4-OH-TMT) to yield aeruginascin, another bioactive compound found in Psilocybe species. This Psilocybe cubensis (Psychedelic mushroom) protein is 4-hydroxytryptamine kinase.